Here is a 191-residue protein sequence, read N- to C-terminus: Cell division protein SepF (191 aa).

Residues 156-167 (EEASPSNMSNKG) show a composition bias toward polar residues. A disordered region spans residues 156–191 (EEASPSNMSNKGNDLISKETSPAPEPAWGETVATAL).

This sequence belongs to the SepF family. As to quaternary structure, homodimer. Interacts with FtsZ.

It localises to the cytoplasm. Cell division protein that is part of the divisome complex and is recruited early to the Z-ring. Probably stimulates Z-ring formation, perhaps through the cross-linking of FtsZ protofilaments. Its function overlaps with FtsA. The polypeptide is Cell division protein SepF (Prochlorococcus marinus (strain NATL1A)).